The primary structure comprises 263 residues: Methylesterase 2 (263 aa).

The active-site Acyl-ester intermediate is S85. Catalysis depends on charge relay system residues D213 and H241.

The protein belongs to the AB hydrolase superfamily. Methylesterase family.

The catalysed reaction is methyl (indol-3-yl)acetate + H2O = (indol-3-yl)acetate + methanol + H(+). It catalyses the reaction methyl (-)-jasmonate + H2O = jasmonate + methanol + H(+). The enzyme catalyses methyl salicylate + H2O = salicylate + methanol + H(+). The protein operates within plant hormone biosynthesis. It participates in lipid metabolism; oxylipin biosynthesis. Its activity is regulated as follows. Esterase activity is down-regulated by salicylic acid (SA). Down-regulated by agrochemicals Paraoxon, 3,4-DCl and Profenofos. In terms of biological role, methylesterase shown to have carboxylesterase activity, methyl indole-3-acetic acid (MeIAA) esterase activity, methyl salicylate (MeSA) esterase activity and methyl jasmonate (MeJA) esterase activity in vitro. This chain is Methylesterase 2, found in Arabidopsis thaliana (Mouse-ear cress).